A 237-amino-acid polypeptide reads, in one-letter code: Prospore formation at selected spindle poles protein 1 (237 aa).

The protein resides in the nucleus. It localises to the cytoplasm. It is found in the cytoskeleton. The protein localises to the microtubule organizing center. Its subcellular location is the spindle pole body. In terms of biological role, involved in the pathway that organizes the shaping and sizing of the prospore membrane (PSM) during sporulation. Required to localize MPC54 to all four spindle pole bodies, and localize DON1 and SPO14 to four prospore membranes. This is Prospore formation at selected spindle poles protein 1 (PFS1) from Saccharomyces cerevisiae (strain ATCC 204508 / S288c) (Baker's yeast).